Consider the following 421-residue polypeptide: Large ribosomal subunit protein uL4 (421 aa).

The residue at position 2 (Ala2) is an N-acetylalanine. Position 14 is an N6-acetyllysine (Lys14). Arg97 is modified (omega-N-methylarginine). Lys106 carries the N6-acetyllysine modification. Residue Lys239 forms a Glycyl lysine isopeptide (Lys-Gly) (interchain with G-Cter in SUMO2) linkage. The residue at position 259 (Lys259) is an N6-acetyllysine. Thr266 is modified (phosphothreonine). Position 290 is a phosphoserine (Ser290). Arg300 carries the post-translational modification Citrulline. Residue Lys327 forms a Glycyl lysine isopeptide (Lys-Gly) (interchain with G-Cter in SUMO2) linkage. Lys333 and Lys353 each carry N6-acetyllysine. Residues 359-421 form a disordered region; it reads EAKSEEKGVP…PTTEEKKPAA (63 aa). Lys361 is subject to N6-acetyllysine; alternate. Lys361 is covalently cross-linked (Glycyl lysine isopeptide (Lys-Gly) (interchain with G-Cter in SUMO1); alternate). Phosphoserine is present on Ser362. The span at 368–391 shows a compositional bias: basic residues; the sequence is PGKKPRRKKGKKTVGVKKPKKPVV. Basic and acidic residues predominate over residues 401-421; the sequence is PAADKKPAEKKPTTEEKKPAA.

This sequence belongs to the universal ribosomal protein uL4 family. As to quaternary structure, component of the large ribosomal subunit. May bind IPO9 with low affinity. Interacts with RBM3. Post-translationally, citrullinated by PADI4.

The protein resides in the cytoplasm. Functionally, component of the large ribosomal subunit. The ribosome is a large ribonucleoprotein complex responsible for the synthesis of proteins in the cell. The protein is Large ribosomal subunit protein uL4 (RPL4) of Canis lupus familiaris (Dog).